The primary structure comprises 326 residues: Peroxidase 43 (326 aa).

An N-terminal signal peptide occupies residues 1–24; that stretch reads MVWANAKMRLALSLVTVFFGISLA. Intrachain disulfides connect Cys-35/Cys-112, Cys-68/Cys-73, Cys-118/Cys-322, and Cys-196/Cys-228. His-66 acts as the Proton acceptor in catalysis. Residues Asp-67, Val-70, Gly-72, Asp-74, and Ser-76 each coordinate Ca(2+). Asn-151 carries an N-linked (GlcNAc...) asparagine glycan. Substrate is bound at residue Pro-159. His-189 lines the heme b pocket. Position 190 (Thr-190) interacts with Ca(2+). Positions 241, 244, and 249 each coordinate Ca(2+).

The protein belongs to the peroxidase family. Classical plant (class III) peroxidase subfamily. Requires heme b as cofactor. Ca(2+) serves as cofactor.

It is found in the secreted. It carries out the reaction 2 a phenolic donor + H2O2 = 2 a phenolic radical donor + 2 H2O. Removal of H(2)O(2), oxidation of toxic reductants, biosynthesis and degradation of lignin, suberization, auxin catabolism, response to environmental stresses such as wounding, pathogen attack and oxidative stress. These functions might be dependent on each isozyme/isoform in each plant tissue. This chain is Peroxidase 43 (PER43), found in Arabidopsis thaliana (Mouse-ear cress).